A 383-amino-acid polypeptide reads, in one-letter code: Histidine decarboxylase (383 aa).

Histidine 120 provides a ligand contact to substrate. Lysine 233 carries the post-translational modification N6-(pyridoxal phosphate)lysine.

Belongs to the group II decarboxylase family. As to quaternary structure, homotetramer. It depends on pyridoxal 5'-phosphate as a cofactor.

It carries out the reaction L-histidine + H(+) = histamine + CO2. The sequence is that of Histidine decarboxylase from Acinetobacter baumannii (strain AB307-0294).